Reading from the N-terminus, the 306-residue chain is Ribosomal RNA small subunit methyltransferase H (306 aa).

Residues 33-35 (GGY), Asp-51, Phe-78, Asp-96, and Gln-103 each bind S-adenosyl-L-methionine.

It belongs to the methyltransferase superfamily. RsmH family.

It localises to the cytoplasm. The enzyme catalyses cytidine(1402) in 16S rRNA + S-adenosyl-L-methionine = N(4)-methylcytidine(1402) in 16S rRNA + S-adenosyl-L-homocysteine + H(+). Specifically methylates the N4 position of cytidine in position 1402 (C1402) of 16S rRNA. This Rickettsia felis (strain ATCC VR-1525 / URRWXCal2) (Rickettsia azadi) protein is Ribosomal RNA small subunit methyltransferase H.